The primary structure comprises 189 residues: RPW8-like protein 1 (189 aa).

The RPW8 domain maps to Met1–Glu153. A helical membrane pass occupies residues Leu7–Ile24. Coiled-coil stretches lie at residues Phe65 to Arg92 and Asp126 to Gln147. A glycan (N-linked (GlcNAc...) asparagine) is linked at Asn177.

It belongs to the plant RPW8 protein family.

It localises to the membrane. Probable disease resistance (R) protein. This Arabidopsis thaliana (Mouse-ear cress) protein is RPW8-like protein 1.